The chain runs to 415 residues: Serine hydroxymethyltransferase (415 aa).

Residues Leu-117 and 121 to 123 contribute to the (6S)-5,6,7,8-tetrahydrofolate site; that span reads GHL. At Lys-226 the chain carries N6-(pyridoxal phosphate)lysine. Glu-241 is a binding site for (6S)-5,6,7,8-tetrahydrofolate.

This sequence belongs to the SHMT family. As to quaternary structure, homodimer. It depends on pyridoxal 5'-phosphate as a cofactor.

The protein resides in the cytoplasm. It catalyses the reaction (6R)-5,10-methylene-5,6,7,8-tetrahydrofolate + glycine + H2O = (6S)-5,6,7,8-tetrahydrofolate + L-serine. It functions in the pathway one-carbon metabolism; tetrahydrofolate interconversion. The protein operates within amino-acid biosynthesis; glycine biosynthesis; glycine from L-serine: step 1/1. Its function is as follows. Catalyzes the reversible interconversion of serine and glycine with tetrahydrofolate (THF) serving as the one-carbon carrier. This reaction serves as the major source of one-carbon groups required for the biosynthesis of purines, thymidylate, methionine, and other important biomolecules. Also exhibits THF-independent aldolase activity toward beta-hydroxyamino acids, producing glycine and aldehydes, via a retro-aldol mechanism. The protein is Serine hydroxymethyltransferase of Bacillus licheniformis (strain ATCC 14580 / DSM 13 / JCM 2505 / CCUG 7422 / NBRC 12200 / NCIMB 9375 / NCTC 10341 / NRRL NRS-1264 / Gibson 46).